The chain runs to 134 residues: Profilin-2 (134 aa).

An intrachain disulfide couples Cys13 to Cys118. The Involved in PIP2 interaction motif lies at 84–100 (AVIRGKKGSGGITIKET). Thr114 is subject to Phosphothreonine.

The protein belongs to the profilin family. Occurs in many kinds of cells as a complex with monomeric actin in a 1:1 ratio. In terms of processing, phosphorylated by MAP kinases.

It is found in the cytoplasm. Its subcellular location is the cytoskeleton. Binds to actin and affects the structure of the cytoskeleton. At high concentrations, profilin prevents the polymerization of actin, whereas it enhances it at low concentrations. This chain is Profilin-2, found in Olea europaea (Common olive).